The chain runs to 161 residues: Urease accessory protein UreE (161 aa).

The protein belongs to the UreE family. Homodimer.

It is found in the cytoplasm. Involved in urease metallocenter assembly. Binds nickel. Probably functions as a nickel donor during metallocenter assembly. It is not essential for urease activity. This is Urease accessory protein UreE from Proteus mirabilis (strain HI4320).